Reading from the N-terminus, the 633-residue chain is Chitinase 2 (633 aa).

The GH18 domain maps to 151-602 (PKLSAYITDW…NAAREGLGYV (452 aa)). Chitin-binding positions include 275–276 (QN) and 306–309 (GGWS). The Proton donor role is filled by E349. Residues Y350, 422 to 425 (MSYD), and W582 each bind chitin.

Belongs to the glycosyl hydrolase 18 family. In terms of assembly, semipurified toxin complex consists of at least YenA1-YenA2-YenB-YenC1-YenC2-Chi1-Chi2. The Yen-TC:K9 subcomplex is about 26 nm tall and 22 nm in diameter with 5-fold symmetry and 5 copies of YenA1, YenA2, Chi1 and Chi2; the chitinase subunits may be solvent accessible on the exterior the complex. The Yen-TC:K9 subcomplex has no insecticidal activity. The native complex with additional YenB, YenC1 and YenC2 subunits is 16 nm taller and is insecticidal; the toxicity-conferring subunits are present at about 1 copy each.

It is found in the secreted. It carries out the reaction Random endo-hydrolysis of N-acetyl-beta-D-glucosaminide (1-&gt;4)-beta-linkages in chitin and chitodextrins.. Toxin complex is secreted when grown at 25 degrees Celsius or less; at higher temperatures the proteins are present intracellularly but not secreted. In terms of biological role, part of an orally active toxin complex (TC) with strong insecticidal effects on larvae of the Coleoptera Costelytra zealandica, Acrossidius tasmania and Adoryphorus couloni and some Lepidoptera larvae. The TC has an endochitinase activity. This subunit might aid infection by degradation of the larval peritrophic membrane. The sequence is that of Chitinase 2 from Yersinia entomophaga.